Reading from the N-terminus, the 457-residue chain is Argininosuccinate lyase (457 aa).

This sequence belongs to the lyase 1 family. Argininosuccinate lyase subfamily.

The protein localises to the cytoplasm. The catalysed reaction is 2-(N(omega)-L-arginino)succinate = fumarate + L-arginine. It functions in the pathway amino-acid biosynthesis; L-arginine biosynthesis; L-arginine from L-ornithine and carbamoyl phosphate: step 3/3. The polypeptide is Argininosuccinate lyase (Escherichia coli O7:K1 (strain IAI39 / ExPEC)).